We begin with the raw amino-acid sequence, 321 residues long: Basic leucine zipper 34 (321 aa).

Residues 97–189 (TDDDNLHSNP…SGNRILDPKR (93 aa)) are disordered. 3 stretches are compositionally biased toward low complexity: residues 110–133 (NNKNNNVGPTGSSSNTSTPSNSFN), 145–155 (NMNNNINNNYN), and 172–182 (SNNNSGDSSGN). In terms of domain architecture, bZIP spans 186–238 (DPKRVKRILANRQSAQRSRVRKLQYISELERSVTSLQAEVSVLSPRVAFLDHQ). Residues 188 to 207 (KRVKRILANRQSAQRSRVRK) are basic motif. The segment at 214–235 (LERSVTSLQAEVSVLSPRVAFL) is leucine-zipper.

In terms of assembly, forms heterodimers with BZIP18, BZIP43 and VIP1/BZIP51. As to expression, expressed in vascular tissues of leaves, stems and siliques, anthers, filaments, tapetum, mature pollen grains, pistil vascular tissues and papillar cells, and funiculi.

It localises to the nucleus. Its function is as follows. Transcriptional activator involved in the sporophytic control of cell wall patterning and gametophytic control of pollen development. May play a role in the control of metabolic pathways regulating cellular transport and lipid metabolism. The sequence is that of Basic leucine zipper 34 from Arabidopsis thaliana (Mouse-ear cress).